Consider the following 363-residue polypeptide: DNA replication and repair protein RecF (363 aa).

30-37 (GNNAQGKT) is a binding site for ATP.

It belongs to the RecF family.

The protein localises to the cytoplasm. In terms of biological role, the RecF protein is involved in DNA metabolism; it is required for DNA replication and normal SOS inducibility. RecF binds preferentially to single-stranded, linear DNA. It also seems to bind ATP. This Clostridium acetobutylicum (strain ATCC 824 / DSM 792 / JCM 1419 / IAM 19013 / LMG 5710 / NBRC 13948 / NRRL B-527 / VKM B-1787 / 2291 / W) protein is DNA replication and repair protein RecF.